A 525-amino-acid polypeptide reads, in one-letter code: Probable alpha-galactosidase A (525 aa).

An N-terminal signal peptide occupies residues Met1–Ala17. A disulfide bond links Cys40 and Cys72. N-linked (GlcNAc...) asparagine glycosylation is found at Asn43, Asn81, and Asn117. Residues Cys120 and Cys150 are joined by a disulfide bond. The active-site Nucleophile is the Asp148. Asn197 is a glycosylation site (N-linked (GlcNAc...) asparagine). Catalysis depends on Asp206, which acts as the Proton donor. The Ricin B-type lectin domain occupies Pro402–Ala525. Intrachain disulfides connect Cys422-Cys434 and Cys459-Cys472.

This sequence belongs to the glycosyl hydrolase 27 family.

It is found in the secreted. The enzyme catalyses Hydrolysis of terminal, non-reducing alpha-D-galactose residues in alpha-D-galactosides, including galactose oligosaccharides, galactomannans and galactolipids.. Functionally, hydrolyzes a variety of simple alpha-D-galactoside as well as more complex molecules such as oligosaccharides and polysaccharides. The polypeptide is Probable alpha-galactosidase A (aglA) (Aspergillus clavatus (strain ATCC 1007 / CBS 513.65 / DSM 816 / NCTC 3887 / NRRL 1 / QM 1276 / 107)).